Consider the following 2434-residue polypeptide: ATP-binding cassette sub-family A member 2 (2434 aa).

Asn-14 carries an N-linked (GlcNAc...) asparagine glycan. Helical transmembrane passes span 22 to 42 and 54 to 74; these read PWVL…LLGL and AFYT…QSLC. N-linked (GlcNAc...) asparagine glycosylation is found at Asn-89, Asn-168, and Asn-173. An N5-methylglutamine modification is found at Gln-271. N-linked (GlcNAc...) asparagine glycosylation is found at Asn-305, Asn-368, Asn-379, Asn-420, Asn-432, Asn-476, Asn-484, Asn-494, Asn-530, Asn-549, Asn-590, Asn-600, and Asn-628. The span at 354 to 369 shows a compositional bias: low complexity; the sequence is RAPAPQAGSPSGPANS. The interval 354–396 is disordered; it reads RAPAPQAGSPSGPANSTGVGANTGPNTTVEEGTQSPVTPASPD. Positions 370–396 are enriched in polar residues; that stretch reads TGVGANTGPNTTVEEGTQSPVTPASPD. 6 consecutive transmembrane segments (helical) span residues 699–719, 750–770, 782–802, 813–833, 857–877, and 893–913; these read FLFV…VYSV, VAWF…LTAI, VLII…FCFL, ASAC…YVAI, AFGL…GIQW, and LLAV…TWYI. Positions 990–1221 constitute an ABC transporter 1 domain; the sequence is VCVDKLTKVY…YGDGYRLTLV (232 aa). Residue 1024 to 1031 coordinates ATP; the sequence is GHNGAGKT. Positions 1225–1246 are disordered; sequence AEPGTSQEPGMASSPSGRPQLS. Positions 1228–1246 are enriched in polar residues; the sequence is GTSQEPGMASSPSGRPQLS. Ser-1238 is subject to Phosphoserine. An N-linked (GlcNAc...) asparagine glycan is attached at Asn-1247. Phosphoserine is present on residues Ser-1327 and Ser-1331. Residues 1461 to 1481 traverse the membrane as a helical segment; sequence ILLPAFFVCVAMTVALSVPEI. N-linked (GlcNAc...) asparagine glycosylation is found at Asn-1496, Asn-1549, and Asn-1557. The interval 1587 to 1606 is disordered; it reads NFVPPPPSPAPSDSPLSPDE. Residues 1589-1598 are compositionally biased toward pro residues; the sequence is VPPPPSPAPS. Asn-1613, Asn-1678, and Asn-1776 each carry an N-linked (GlcNAc...) asparagine glycan. 5 helical membrane passes run 1793–1813, 1842–1862, 1873–1893, 1906–1926, and 1992–2012; these read VVIA…FVVF, VWDM…LFVF, FPAV…IMYP, VFLI…TFLL, and GLVA…MCQY. Residues 2051 to 2286 enclose the ABC transporter 2 domain; that stretch reads VKIENLTKVY…FGDGYMITVR (236 aa). N-linked (GlcNAc...) asparagine glycosylation occurs at Asn-2055. Residue 2088–2095 coordinates ATP; sequence GVNGAGKT. Position 2411 is a phosphothreonine (Thr-2411).

This sequence belongs to the ABC transporter superfamily. ABCA family. In terms of processing, N-glycosylated. Post-translationally, methylated at Gln-271 by N6AMT1. As to expression, expressed at high levels in brain, at moderate levels in heart, kidney and lung, and at low levels in skeletal muscle, stomach, spleen, colon and pancreas. Not detected in the liver or small intestine. In brain, highly expressed in white matter and detected in oligodendrocytes. Expressed in cerebellum as well as the anterior commissure. Expressed mainly in the white matter but is also scattered in gray matter throughout the whole brain. Expressed in myelinating cells of both ventral and dorsal restricted regions in newborn spinal cord. Expressed in non-myelin-forming as well as in myelin-forming Schwann cells in the sciatic nerve.

The protein resides in the endosome membrane. It is found in the lysosome membrane. Functionally, probable transporter, its natural substrate has not been found yet. May have a role in macrophage lipid metabolism and neural development. May play a role in myelination, perhaps as a transporter for certain kinds of myelin chemical components. May play an important role in gamma-secretase processing of APP and thus in amyloid-beta peptide generation. Regulates esterification of plasma membrane cholesterol by modulation of sphingolipid metabolism. Probable lipid transporter that modulates cholesterol sequestration in the late endosome/lysosome by regulating the intracellular sphingolipid metabolism, in turn participates in cholesterol homeostasis. May alter the transbilayer distribution of ceramide in the intraluminal membrane lipid bilayer, favoring its retention in the outer leaflet that results in increased acid ceramidase activity in the late endosome/lysosome, facilitating ceramide deacylation to sphingosine leading to the sequestration of free cholesterol in lysosomes. In addition regulates amyloid-beta production either by activating a signaling pathway that regulates amyloid precursor protein transcription through the modulation of sphingolipid metabolism or through its role in gamma-secretase processing of APP. May play a role in myelin formation. The protein is ATP-binding cassette sub-family A member 2 of Rattus norvegicus (Rat).